A 304-amino-acid chain; its full sequence is Acetyl-coenzyme A carboxylase carboxyl transferase subunit beta (304 aa).

The region spanning 25-294 (VWTKCDSCGQ…PSVVESKADT (270 aa)) is the CoA carboxyltransferase N-terminal domain. Residues Cys29, Cys32, Cys48, and Cys51 each contribute to the Zn(2+) site. The C4-type zinc-finger motif lies at 29 to 51 (CDSCGQVLYRAELERNLEVCPKC).

Belongs to the AccD/PCCB family. As to quaternary structure, acetyl-CoA carboxylase is a heterohexamer composed of biotin carboxyl carrier protein (AccB), biotin carboxylase (AccC) and two subunits each of ACCase subunit alpha (AccA) and ACCase subunit beta (AccD). Requires Zn(2+) as cofactor.

It localises to the cytoplasm. It carries out the reaction N(6)-carboxybiotinyl-L-lysyl-[protein] + acetyl-CoA = N(6)-biotinyl-L-lysyl-[protein] + malonyl-CoA. Its pathway is lipid metabolism; malonyl-CoA biosynthesis; malonyl-CoA from acetyl-CoA: step 1/1. Component of the acetyl coenzyme A carboxylase (ACC) complex. Biotin carboxylase (BC) catalyzes the carboxylation of biotin on its carrier protein (BCCP) and then the CO(2) group is transferred by the transcarboxylase to acetyl-CoA to form malonyl-CoA. In Yersinia pestis bv. Antiqua (strain Nepal516), this protein is Acetyl-coenzyme A carboxylase carboxyl transferase subunit beta.